Consider the following 259-residue polypeptide: Taurine import ATP-binding protein TauB (259 aa).

One can recognise an ABC transporter domain in the interval 4 to 233; the sequence is LELERISAQY…RYAAGESARA (230 aa). 38 to 45 contacts ATP; that stretch reads GPSGSGKT.

The protein belongs to the ABC transporter superfamily. Taurine importer (TC 3.A.1.17.1) family. The complex is composed of two ATP-binding proteins (TauB), two transmembrane proteins (TauC) and a solute-binding protein (TauA).

It localises to the cell inner membrane. The enzyme catalyses taurine(out) + ATP + H2O = taurine(in) + ADP + phosphate + H(+). Functionally, part of the ABC transporter complex TauABC involved in taurine import. Responsible for energy coupling to the transport system. This Pseudomonas entomophila (strain L48) protein is Taurine import ATP-binding protein TauB.